The sequence spans 231 residues: 7-cyano-7-deazaguanine synthase (231 aa).

ATP is bound at residue 7 to 17 (LSSGLDSVAAL). 4 residues coordinate Zn(2+): Cys-195, Cys-203, Cys-206, and Cys-209.

This sequence belongs to the QueC family. It depends on Zn(2+) as a cofactor.

It carries out the reaction 7-carboxy-7-deazaguanine + NH4(+) + ATP = 7-cyano-7-deazaguanine + ADP + phosphate + H2O + H(+). Its pathway is purine metabolism; 7-cyano-7-deazaguanine biosynthesis. Functionally, catalyzes the ATP-dependent conversion of 7-carboxy-7-deazaguanine (CDG) to 7-cyano-7-deazaguanine (preQ(0)). This Methanosarcina barkeri (strain Fusaro / DSM 804) protein is 7-cyano-7-deazaguanine synthase.